The chain runs to 236 residues: Segregation and condensation protein A (236 aa).

This sequence belongs to the ScpA family. As to quaternary structure, component of a cohesin-like complex composed of ScpA, ScpB and the Smc homodimer, in which ScpA and ScpB bind to the head domain of Smc. The presence of the three proteins is required for the association of the complex with DNA.

Its subcellular location is the cytoplasm. In terms of biological role, participates in chromosomal partition during cell division. May act via the formation of a condensin-like complex containing Smc and ScpB that pull DNA away from mid-cell into both cell halves. In Streptococcus sanguinis (strain SK36), this protein is Segregation and condensation protein A.